A 779-amino-acid chain; its full sequence is uncharacterized protein (779 aa).

Phosphoserine is present on residues serine 97 and serine 120. Basic and acidic residues predominate over residues 125 to 135 (EIDGEDEKKSV). Positions 125-174 (EIDGEDEKKSVGQESITGSAKRKDRRSKTNGSKRQKAEANREPPSDISLS) are disordered. The segment covering 144–158 (AKRKDRRSKTNGSKR) has biased composition (basic residues). The span at 159-168 (QKAEANREPP) shows a compositional bias: basic and acidic residues. ATP contacts are provided by residues 215–222 (GPPGCGKT) and 533–540 (GPPGCGKT). The interval 759–779 (DRQKYQRLAKRWSSASTNDAD) is disordered.

It belongs to the AAA ATPase family.

The protein resides in the nucleus. This is an uncharacterized protein from Schizosaccharomyces pombe (strain 972 / ATCC 24843) (Fission yeast).